The primary structure comprises 502 residues: Probable glycine dehydrogenase (decarboxylating) subunit 2 (502 aa).

Residue Lys273 is modified to N6-(pyridoxal phosphate)lysine.

The protein belongs to the GcvP family. C-terminal subunit subfamily. The glycine cleavage system is composed of four proteins: P, T, L and H. In this organism, the P 'protein' is a heterodimer of two subunits. It depends on pyridoxal 5'-phosphate as a cofactor.

It carries out the reaction N(6)-[(R)-lipoyl]-L-lysyl-[glycine-cleavage complex H protein] + glycine + H(+) = N(6)-[(R)-S(8)-aminomethyldihydrolipoyl]-L-lysyl-[glycine-cleavage complex H protein] + CO2. In terms of biological role, the glycine cleavage system catalyzes the degradation of glycine. The P protein binds the alpha-amino group of glycine through its pyridoxal phosphate cofactor; CO(2) is released and the remaining methylamine moiety is then transferred to the lipoamide cofactor of the H protein. This is Probable glycine dehydrogenase (decarboxylating) subunit 2 from Thermococcus gammatolerans (strain DSM 15229 / JCM 11827 / EJ3).